The sequence spans 214 residues: Large ribosomal subunit protein uL3 (214 aa).

Positions 130–151 are enriched in polar residues; the sequence is FSSNRASHGNSRSHNTPGSIGQ. Residues 130 to 163 form a disordered region; it reads FSSNRASHGNSRSHNTPGSIGQAQDPGRVFPGKR. Residue Gln153 is modified to N5-methylglutamine.

It belongs to the universal ribosomal protein uL3 family. Part of the 50S ribosomal subunit. Forms a cluster with proteins L14 and L19. In terms of processing, methylated by PrmB.

Its function is as follows. One of the primary rRNA binding proteins, it binds directly near the 3'-end of the 23S rRNA, where it nucleates assembly of the 50S subunit. The chain is Large ribosomal subunit protein uL3 from Chromobacterium violaceum (strain ATCC 12472 / DSM 30191 / JCM 1249 / CCUG 213 / NBRC 12614 / NCIMB 9131 / NCTC 9757 / MK).